The sequence spans 1292 residues: HMG domain-containing protein 3 (1292 aa).

A DNA-binding region (HMG box) is located at residues 42–110 (TKKPRSAYLL…GLDPNSKLSA (69 aa)). Disordered regions lie at residues 363–391 (SKGS…KLTL), 448–505 (VQPE…GRAR), and 562–588 (KQLG…NRTS). Positions 370-391 (RNQQPVTTEQNSSKENASKLTL) are enriched in polar residues. Low complexity predominate over residues 467–478 (PTPSEGTSTSSP). Polar residues predominate over residues 562–572 (KQLGQPIQQPS).

Its subcellular location is the nucleus. The polypeptide is HMG domain-containing protein 3 (Homo sapiens (Human)).